The chain runs to 578 residues: Rhoptry protein 4 (578 aa).

Positions 1-33 (MGHPTSFGQPSCLVWLAAAFLVLGLCLVQQGAG) are cleaved as a signal peptide. The interval 56-82 (VDKYSRDSTEGENTVSEGEAEGSRGGS) is disordered. Positions 259–546 (LVRGRRIGLF…ALQAIETPEY (288 aa)) constitute a Protein kinase domain. Residues 559 to 578 (LYSGDGTLTGGDDDMPPLET) are disordered. Residues 569–578 (GDDDMPPLET) show a composition bias toward acidic residues.

Phosphorylated on multiple serine and threonine residues in parasitic extracts and infected cells but not in extracellular parasites.

The protein localises to the secreted. Its subcellular location is the parasitophorous vacuole membrane. Thought to play a role in parasitophorous vacuole membrane function during the infection of host organisms. In Toxoplasma gondii, this protein is Rhoptry protein 4.